The sequence spans 360 residues: Biotin synthase (360 aa).

The Radical SAM core domain maps to 83–315 (FCGKYFDLCT…KSFLRYCGGR (233 aa)). Residues C101, C105, and C108 each contribute to the [4Fe-4S] cluster site. [2Fe-2S] cluster-binding residues include S145, C180, C240, and R310.

It belongs to the radical SAM superfamily. Biotin synthase family. In terms of assembly, homodimer. [4Fe-4S] cluster serves as cofactor. The cofactor is [2Fe-2S] cluster.

The enzyme catalyses (4R,5S)-dethiobiotin + (sulfur carrier)-SH + 2 reduced [2Fe-2S]-[ferredoxin] + 2 S-adenosyl-L-methionine = (sulfur carrier)-H + biotin + 2 5'-deoxyadenosine + 2 L-methionine + 2 oxidized [2Fe-2S]-[ferredoxin]. It participates in cofactor biosynthesis; biotin biosynthesis; biotin from 7,8-diaminononanoate: step 2/2. In terms of biological role, catalyzes the conversion of dethiobiotin (DTB) to biotin by the insertion of a sulfur atom into dethiobiotin via a radical-based mechanism. The polypeptide is Biotin synthase (Fusobacterium nucleatum subsp. nucleatum (strain ATCC 25586 / DSM 15643 / BCRC 10681 / CIP 101130 / JCM 8532 / KCTC 2640 / LMG 13131 / VPI 4355)).